The following is a 239-amino-acid chain: Segregation and condensation protein A (239 aa).

Belongs to the ScpA family. As to quaternary structure, component of a cohesin-like complex composed of ScpA, ScpB and the Smc homodimer, in which ScpA and ScpB bind to the head domain of Smc. The presence of the three proteins is required for the association of the complex with DNA.

The protein resides in the cytoplasm. Functionally, participates in chromosomal partition during cell division. May act via the formation of a condensin-like complex containing Smc and ScpB that pull DNA away from mid-cell into both cell halves. The chain is Segregation and condensation protein A from Streptococcus suis (strain 98HAH33).